Reading from the N-terminus, the 320-residue chain is o-succinylbenzoate synthase (320 aa).

The Proton donor role is filled by lysine 133. Residues aspartate 161, glutamate 190, and aspartate 213 each contribute to the Mg(2+) site. The active-site Proton acceptor is the lysine 235.

The protein belongs to the mandelate racemase/muconate lactonizing enzyme family. MenC type 1 subfamily. A divalent metal cation serves as cofactor.

It carries out the reaction (1R,6R)-6-hydroxy-2-succinyl-cyclohexa-2,4-diene-1-carboxylate = 2-succinylbenzoate + H2O. The protein operates within quinol/quinone metabolism; 1,4-dihydroxy-2-naphthoate biosynthesis; 1,4-dihydroxy-2-naphthoate from chorismate: step 4/7. It participates in quinol/quinone metabolism; menaquinone biosynthesis. Functionally, converts 2-succinyl-6-hydroxy-2,4-cyclohexadiene-1-carboxylate (SHCHC) to 2-succinylbenzoate (OSB). This Escherichia coli O6:K15:H31 (strain 536 / UPEC) protein is o-succinylbenzoate synthase.